A 211-amino-acid chain; its full sequence is Protein-methionine-sulfoxide reductase heme-binding subunit MsrQ (211 aa).

The next 5 helical transmembrane spans lie at 17 to 37, 82 to 102, 116 to 136, 153 to 173, and 178 to 198; these read LAGLLPFLWLVWAINHGGLGA, LWCFAWATLHLTSYALLELGV, PYLTLGIISWVILLALAFTST, FVYLVAILAPIHYLWSVKIIS, and IYAGLAVLLLALRYKKLLSLF.

The protein belongs to the MsrQ family. As to quaternary structure, heterodimer of a catalytic subunit (MsrP) and a heme-binding subunit (MsrQ). FMN is required as a cofactor. It depends on heme b as a cofactor.

The protein resides in the cell inner membrane. Functionally, part of the MsrPQ system that repairs oxidized periplasmic proteins containing methionine sulfoxide residues (Met-O), using respiratory chain electrons. Thus protects these proteins from oxidative-stress damage caused by reactive species of oxygen and chlorine generated by the host defense mechanisms. MsrPQ is essential for the maintenance of envelope integrity under bleach stress, rescuing a wide series of structurally unrelated periplasmic proteins from methionine oxidation, including the primary periplasmic chaperone SurA and the lipoprotein Pal. MsrQ provides electrons for reduction to the reductase catalytic subunit MsrP, using the quinone pool of the respiratory chain. This Shigella boydii serotype 4 (strain Sb227) protein is Protein-methionine-sulfoxide reductase heme-binding subunit MsrQ.